The chain runs to 597 residues: Peptidyl-prolyl cis-trans isomerase-like 2 (597 aa).

Residues 41 to 114 enclose the U-box domain; sequence KKLPFNFCAA…TTDSDENKGD (74 aa). The 156-residue stretch at 328–483 folds into the PPIase cyclophilin-type domain; that stretch reads NKGYVRMETN…NKIVIKDMII (156 aa). The span at 495-519 shows a compositional bias: basic and acidic residues; the sequence is KKQKEGEEERKREVARQGGTEDDRT. Disordered stretches follow at residues 495-521 and 560-597; these read KKQKEGEEERKREVARQGGTEDDRTTW and ATTTTTTTRKAEEEEVDTWEEPVRKKAKMGGFGNFDGW.

The protein belongs to the cyclophilin-type PPIase family. PPIL2 subfamily.

It localises to the nucleus. The enzyme catalyses [protein]-peptidylproline (omega=180) = [protein]-peptidylproline (omega=0). It catalyses the reaction S-ubiquitinyl-[E2 ubiquitin-conjugating enzyme]-L-cysteine + [acceptor protein]-L-lysine = [E2 ubiquitin-conjugating enzyme]-L-cysteine + N(6)-ubiquitinyl-[acceptor protein]-L-lysine.. It participates in protein modification; protein ubiquitination. Its function is as follows. May catalyze the cis-trans isomerization of proline imidic peptide bonds in oligopeptides thereby assisting the folding of proteins. May also function as a chaperone, playing a role in intracellular transport of proteins. May also have a protein ubiquitin ligase activity acting as an E3 ubiquitin protein ligase or as a ubiquitin-ubiquitin ligase promoting elongation of ubiquitin chains on proteins. This chain is Peptidyl-prolyl cis-trans isomerase-like 2 (ppi-2), found in Neurospora crassa (strain ATCC 24698 / 74-OR23-1A / CBS 708.71 / DSM 1257 / FGSC 987).